The sequence spans 295 residues: MPVYEHLLPVNGAWRQDVTNWLSEDVPSFDFGGYVVGSDLKEANLYCKQDGMLCGVPFAQEVFNQCELQVEWLFKEGSFLEPSKNDSGKIVVAKITGPAKNILLAERTALNILSRSSGIATASHKIISLARSTGYKGTIAGTRKTTPGLRRLEKYSMLVGGCDTHRYDLSSMVMLKDNHIWATGSITNAVKNARAVCGFAVKIEVECLSEDEATEAIEAGADVIMLDNFKGDGLKMCAQSLKNKWNGKKHFLLECSGGLNLDNLEEYLCDDIDIYSTSSIHQGTPVIDFSLKLAH.

Substrate contacts are provided by residues Arg107, 142–144 (TRK), Arg166, Lys176, Glu206, Asp227, and 256–258 (SGG).

This sequence belongs to the NadC/ModD family. In terms of assembly, hexamer formed by 3 homodimers.

The protein localises to the cytoplasm. Its subcellular location is the nucleus. It carries out the reaction nicotinate beta-D-ribonucleotide + CO2 + diphosphate = quinolinate + 5-phospho-alpha-D-ribose 1-diphosphate + 2 H(+). It participates in cofactor biosynthesis; NAD(+) biosynthesis; nicotinate D-ribonucleotide from quinolinate: step 1/1. Involved in the catabolism of quinolinic acid (QA). This Saccharomyces cerevisiae (strain ATCC 204508 / S288c) (Baker's yeast) protein is Nicotinate-nucleotide pyrophosphorylase [carboxylating] (BNA6).